We begin with the raw amino-acid sequence, 113 residues long: Large ribosomal subunit protein uL22 (113 aa).

This sequence belongs to the universal ribosomal protein uL22 family. In terms of assembly, part of the 50S ribosomal subunit.

Functionally, this protein binds specifically to 23S rRNA; its binding is stimulated by other ribosomal proteins, e.g. L4, L17, and L20. It is important during the early stages of 50S assembly. It makes multiple contacts with different domains of the 23S rRNA in the assembled 50S subunit and ribosome. The globular domain of the protein is located near the polypeptide exit tunnel on the outside of the subunit, while an extended beta-hairpin is found that lines the wall of the exit tunnel in the center of the 70S ribosome. The polypeptide is Large ribosomal subunit protein uL22 (Desulforudis audaxviator (strain MP104C)).